The primary structure comprises 330 residues: AA9 family lytic polysaccharide monooxygenase E (330 aa).

Positions 1–20 are cleaved as a signal peptide; sequence MRSTLVTGLIAGLLSQQAAA. Cu(2+) is bound by residues histidine 21 and histidine 99. Cysteine 58 and cysteine 193 are disulfide-bonded. The O2 site is built by histidine 179 and glutamine 188. Residue tyrosine 190 participates in Cu(2+) binding. A CBM1 domain is found at 293–330; sequence CSVAKYQQCGGTGYTGCTSCASGSTCSAVSPPYYSQCV.

Belongs to the polysaccharide monooxygenase AA9 family. The cofactor is Cu(2+).

It localises to the secreted. It carries out the reaction [(1-&gt;4)-beta-D-glucosyl]n+m + reduced acceptor + O2 = 4-dehydro-beta-D-glucosyl-[(1-&gt;4)-beta-D-glucosyl]n-1 + [(1-&gt;4)-beta-D-glucosyl]m + acceptor + H2O.. In terms of biological role, lytic polysaccharide monooxygenase (LPMO) that depolymerizes crystalline and amorphous polysaccharides via the oxidation of scissile alpha- or beta-(1-4)-glycosidic bonds, yielding exclusively C1 oxidation products. Catalysis by LPMOs requires the reduction of the active-site copper from Cu(II) to Cu(I) by a reducing agent and H(2)O(2) or O(2) as a cosubstrate. The chain is AA9 family lytic polysaccharide monooxygenase E (gh61-5) from Neurospora crassa (strain ATCC 24698 / 74-OR23-1A / CBS 708.71 / DSM 1257 / FGSC 987).